The chain runs to 340 residues: Phenylalanine--tRNA ligase alpha subunit (340 aa).

Glutamate 254 contributes to the Mg(2+) binding site.

It belongs to the class-II aminoacyl-tRNA synthetase family. Phe-tRNA synthetase alpha subunit type 1 subfamily. In terms of assembly, tetramer of two alpha and two beta subunits. The cofactor is Mg(2+).

It is found in the cytoplasm. The enzyme catalyses tRNA(Phe) + L-phenylalanine + ATP = L-phenylalanyl-tRNA(Phe) + AMP + diphosphate + H(+). This Caldicellulosiruptor saccharolyticus (strain ATCC 43494 / DSM 8903 / Tp8T 6331) protein is Phenylalanine--tRNA ligase alpha subunit.